Here is a 232-residue protein sequence, read N- to C-terminus: 2,3,4,5-tetrahydropyridine-2,6-dicarboxylate N-acetyltransferase (232 aa).

This sequence belongs to the transferase hexapeptide repeat family. DapH subfamily.

It carries out the reaction (S)-2,3,4,5-tetrahydrodipicolinate + acetyl-CoA + H2O = L-2-acetamido-6-oxoheptanedioate + CoA. It functions in the pathway amino-acid biosynthesis; L-lysine biosynthesis via DAP pathway; LL-2,6-diaminopimelate from (S)-tetrahydrodipicolinate (acetylase route): step 1/3. Functionally, catalyzes the transfer of an acetyl group from acetyl-CoA to tetrahydrodipicolinate. In Streptococcus gordonii (strain Challis / ATCC 35105 / BCRC 15272 / CH1 / DL1 / V288), this protein is 2,3,4,5-tetrahydropyridine-2,6-dicarboxylate N-acetyltransferase.